Reading from the N-terminus, the 492-residue chain is Probable ATP-citrate synthase subunit 2 (492 aa).

Ser24 is subject to Phosphoserine.

In the N-terminal section; belongs to the succinate/malate CoA ligase beta subunit family. This sequence in the C-terminal section; belongs to the succinate/malate CoA ligase alpha subunit family. As to quaternary structure, composed of two subunits.

The protein localises to the cytoplasm. It is found in the nucleus. It catalyses the reaction oxaloacetate + acetyl-CoA + ADP + phosphate = citrate + ATP + CoA. In terms of biological role, ATP citrate-lyase is the primary enzyme responsible for the synthesis of cytosolic acetyl-CoA. Has a central role in de novo lipid synthesis. The protein is Probable ATP-citrate synthase subunit 2 of Schizosaccharomyces pombe (strain 972 / ATCC 24843) (Fission yeast).